The primary structure comprises 1009 residues: Protein naked cuticle (1009 aa).

Composition is skewed to polar residues over residues 68–83 (IITT…ASNK) and 121–130 (LPQDMSSSGS). The segment at 68–166 (IITTPPGNAS…QQQTAAAATG (99 aa)) is disordered. Over residues 152–166 (QQQQQQQQTAAAATG) the composition is skewed to low complexity. Positions 206–282 (EFTCDVSVEG…TVSPEGKSKS (77 aa)) are interaction with dsh. Residues 217 to 253 (KSSQPLQFSFTFYDLDGHHGKITKDDIVGIVYTIYES) enclose the EF-hand domain. 3 disordered regions span residues 328-433 (MSKQ…QQQL), 456-479 (AGNE…RQQD), and 515-580 (GNDS…QQQR). Over residues 349–359 (RRQHRYRPRKL) the composition is skewed to basic residues. The segment covering 370 to 387 (NSEKEKERERERERESHA) has biased composition (basic and acidic residues). A compositionally biased stretch (basic residues) spans 403–414 (KSHHHHHHHGRY). Polar residues predominate over residues 515-525 (GNDSGNWQNRH). 2 stretches are compositionally biased toward low complexity: residues 526–535 (LQQSLQQQPQ) and 570–580 (HQQLQQQQQQR). Residues 584 to 613 (ECWKSALNRNDLISIIRESMEKNRLCFQLN) form a required for nuclear localization and inhibition of Wnt signaling region. Disordered stretches follow at residues 619–662 (NVSP…SPLS), 773–799 (SAAH…HNQK), 835–899 (LQQK…SAGS), and 955–982 (TESG…LDTS). Low complexity-rich tracts occupy residues 624–638 (RQPA…QRQR) and 653–662 (SPAAPQSPLS). A compositionally biased stretch (basic residues) spans 843–857 (RRHRHKQQQQQHHHQ). Residues 858–875 (QQQQQQQQQNQQQQQQQQ) show a composition bias toward low complexity. Acidic residues predominate over residues 968–979 (EADEGQEQEVEL).

This sequence belongs to the NKD family. In terms of assembly, interacts with dsh.

It localises to the cell membrane. Its subcellular location is the cytoplasm. The protein localises to the nucleus. Functionally, cell autonomous antagonist of the canonical Wnt signaling pathway. May activate a second Wnt signaling pathway that controls planar cell polarity. Required for neuroblast specification. The chain is Protein naked cuticle from Drosophila pseudoobscura pseudoobscura (Fruit fly).